Reading from the N-terminus, the 316-residue chain is Transaldolase (316 aa).

Lys132 acts as the Schiff-base intermediate with substrate in catalysis.

Belongs to the transaldolase family. Type 1 subfamily. In terms of assembly, homodimer.

Its subcellular location is the cytoplasm. It carries out the reaction D-sedoheptulose 7-phosphate + D-glyceraldehyde 3-phosphate = D-erythrose 4-phosphate + beta-D-fructose 6-phosphate. It participates in carbohydrate degradation; pentose phosphate pathway; D-glyceraldehyde 3-phosphate and beta-D-fructose 6-phosphate from D-ribose 5-phosphate and D-xylulose 5-phosphate (non-oxidative stage): step 2/3. Functionally, transaldolase is important for the balance of metabolites in the pentose-phosphate pathway. The polypeptide is Transaldolase (Aliivibrio fischeri (strain MJ11) (Vibrio fischeri)).